A 98-amino-acid polypeptide reads, in one-letter code: Integration host factor subunit alpha (98 aa).

Residues 49–71 are disordered; it reads FGNFDLRDKNQRPGRNPKTGEDI.

It belongs to the bacterial histone-like protein family. As to quaternary structure, heterodimer of an alpha and a beta chain.

Functionally, this protein is one of the two subunits of integration host factor, a specific DNA-binding protein that functions in genetic recombination as well as in transcriptional and translational control. This is Integration host factor subunit alpha from Shewanella oneidensis (strain ATCC 700550 / JCM 31522 / CIP 106686 / LMG 19005 / NCIMB 14063 / MR-1).